The primary structure comprises 402 residues: Acetate kinase (402 aa).

Residue asparagine 7 coordinates Mg(2+). Lysine 14 contacts ATP. Arginine 95 is a binding site for substrate. Aspartate 152 (proton donor/acceptor) is an active-site residue. Residues 212–216 (HLGNG), 286–288 (DMR), and 334–338 (GIGEN) contribute to the ATP site. Glutamate 388 serves as a coordination point for Mg(2+).

It belongs to the acetokinase family. In terms of assembly, homodimer. Requires Mg(2+) as cofactor. The cofactor is Mn(2+).

It is found in the cytoplasm. The enzyme catalyses acetate + ATP = acetyl phosphate + ADP. It functions in the pathway metabolic intermediate biosynthesis; acetyl-CoA biosynthesis; acetyl-CoA from acetate: step 1/2. Its function is as follows. Catalyzes the formation of acetyl phosphate from acetate and ATP. Can also catalyze the reverse reaction. The protein is Acetate kinase of Oleidesulfovibrio alaskensis (strain ATCC BAA-1058 / DSM 17464 / G20) (Desulfovibrio alaskensis).